Here is a 289-residue protein sequence, read N- to C-terminus: 4-hydroxybenzoate octaprenyltransferase (289 aa).

The next 8 helical transmembrane spans lie at 21-40, 95-115, 116-136, 138-158, 161-181, 213-233, 236-256, and 268-288; these read PIGTLLLLWPTLWALWLAAG, VLALFAVLALISFALVLTMNS, LTIALSFAALLLAVCYPFMKR, IPIPQLVLGMAFSWSIPMAYA, ANALPLVAWLVFLANLLWTIA, IIGVLQLATLLILLAVGQLMG, AWYYWGLLGAAALFVYQQRLI, and FLNNNYAGALVFIGLVLNYLL.

The protein belongs to the UbiA prenyltransferase family. Requires Mg(2+) as cofactor.

It localises to the cell inner membrane. It catalyses the reaction all-trans-octaprenyl diphosphate + 4-hydroxybenzoate = 4-hydroxy-3-(all-trans-octaprenyl)benzoate + diphosphate. Its pathway is cofactor biosynthesis; ubiquinone biosynthesis. Its function is as follows. Catalyzes the prenylation of para-hydroxybenzoate (PHB) with an all-trans polyprenyl group. Mediates the second step in the final reaction sequence of ubiquinone-8 (UQ-8) biosynthesis, which is the condensation of the polyisoprenoid side chain with PHB, generating the first membrane-bound Q intermediate 3-octaprenyl-4-hydroxybenzoate. In Aeromonas salmonicida (strain A449), this protein is 4-hydroxybenzoate octaprenyltransferase.